We begin with the raw amino-acid sequence, 340 residues long: MKVSIVGITGYSGLELVKILNNHKKVELVSIHATKEVGRRLSDVYPYLAGVCDLKIEDFDAQEIIEKADLVFFATPSGVASSLAEEFVQADFPIIDLSGDHRLPADVYQEWYKKSPAKKMILNKFTYALSEYTDVKGKKFIANPGCYATATELALIPLVAAGLIETDSIIVDAKSGLTGAGKALSESSHFVNVHDNYMTYKLNHHQHIPEIVQTLQAFDADMPEIQFSTSLLPVNRGIMATVYCKLKKDVAVSDIASAFAKAYDDKPFVRVQENLPELHNVIGSNFTDIGFAYNEKTNVMTVISVIDNLLKGASGQAVQNLNLMQGWDETEGLHMTPSYL.

C146 is an active-site residue.

The protein belongs to the NAGSA dehydrogenase family. Type 1 subfamily.

Its subcellular location is the cytoplasm. The catalysed reaction is N-acetyl-L-glutamate 5-semialdehyde + phosphate + NADP(+) = N-acetyl-L-glutamyl 5-phosphate + NADPH + H(+). Its pathway is amino-acid biosynthesis; L-arginine biosynthesis; N(2)-acetyl-L-ornithine from L-glutamate: step 3/4. Catalyzes the NADPH-dependent reduction of N-acetyl-5-glutamyl phosphate to yield N-acetyl-L-glutamate 5-semialdehyde. The chain is N-acetyl-gamma-glutamyl-phosphate reductase from Streptococcus thermophilus (strain CNRZ 1066).